Here is a 406-residue protein sequence, read N- to C-terminus: Riboflavin biosynthesis protein RibBA (406 aa).

Residues 1 to 209 (MSEREEFKFN…IADLIKYRLR (209 aa)) form a DHBP synthase region. D-ribulose 5-phosphate is bound by residues 33 to 34 (RE), Asp38, 148 to 152 (RAGHT), and Glu172. Glu34 is a Mg(2+) binding site. His151 is a binding site for Mg(2+). Residues 210–406 (RETLVEKVAS…VKKDKLGHMF (197 aa)) are GTP cyclohydrolase II. 260 to 264 (RVHSE) serves as a coordination point for GTP. Positions 265, 276, and 278 each coordinate Zn(2+). Residues Gln281, 304 to 306 (EGR), and Thr326 each bind GTP. Asp338 functions as the Proton acceptor; for GTP cyclohydrolase activity in the catalytic mechanism. Residue Arg340 is the Nucleophile; for GTP cyclohydrolase activity of the active site. Thr361 and Lys366 together coordinate GTP.

In the N-terminal section; belongs to the DHBP synthase family. The protein in the C-terminal section; belongs to the GTP cyclohydrolase II family. Mg(2+) is required as a cofactor. It depends on Mn(2+) as a cofactor. The cofactor is Zn(2+).

The catalysed reaction is D-ribulose 5-phosphate = (2S)-2-hydroxy-3-oxobutyl phosphate + formate + H(+). It carries out the reaction GTP + 4 H2O = 2,5-diamino-6-hydroxy-4-(5-phosphoribosylamino)-pyrimidine + formate + 2 phosphate + 3 H(+). It functions in the pathway cofactor biosynthesis; riboflavin biosynthesis; 2-hydroxy-3-oxobutyl phosphate from D-ribulose 5-phosphate: step 1/1. It participates in cofactor biosynthesis; riboflavin biosynthesis; 5-amino-6-(D-ribitylamino)uracil from GTP: step 1/4. Its function is as follows. Catalyzes the conversion of D-ribulose 5-phosphate to formate and 3,4-dihydroxy-2-butanone 4-phosphate. Functionally, catalyzes the conversion of GTP to 2,5-diamino-6-ribosylamino-4(3H)-pyrimidinone 5'-phosphate (DARP), formate and pyrophosphate. The polypeptide is Riboflavin biosynthesis protein RibBA (Aquifex aeolicus (strain VF5)).